We begin with the raw amino-acid sequence, 629 residues long: ATP-dependent RNA helicase DBP6 (629 aa).

Residues Met-1–His-129 are disordered. A compositionally biased stretch (acidic residues) spans Ala-72–Glu-84. Residues Ser-73, Ser-77, and Ser-78 each carry the phosphoserine modification. The span at Ser-88 to Leu-103 shows a compositional bias: polar residues. A compositionally biased stretch (acidic residues) spans Lys-116–Ala-125. The Q motif motif lies at Thr-197 to Leu-205. One can recognise a Helicase ATP-binding domain in the interval Arg-221 to Phe-401. Ala-234 to Thr-241 is an ATP binding site. Positions Asp-341 to Asp-344 match the DEAD box motif. In terms of domain architecture, Helicase C-terminal spans Ser-437–Thr-603.

It belongs to the DEAD box helicase family. DDX51/DBP6 subfamily. Associated with pre-ribosomal particles. Interacts with DBP9 and RSA3. Together with NOP8, URB1, URB2 and RSA3, forms an RNA-independent complex, which is required during early maturation of nascent 60S ribosomal subunits.

It is found in the nucleus. The protein resides in the nucleolus. The enzyme catalyses ATP + H2O = ADP + phosphate + H(+). In terms of biological role, ATP-binding RNA helicase involved in the biogenesis of 60S ribosomal subunits and is required for the normal formation of 25S and 5.8S rRNAs. The sequence is that of ATP-dependent RNA helicase DBP6 (DBP6) from Saccharomyces cerevisiae (strain ATCC 204508 / S288c) (Baker's yeast).